We begin with the raw amino-acid sequence, 620 residues long: Probable potassium transport system protein Kup (620 aa).

A run of 12 helical transmembrane segments spans residues 7–27, 44–64, 98–118, 135–155, 166–186, 201–221, 245–265, 278–298, 335–355, 361–381, 394–414, and 417–437; these read LALA…LYAI, VFGV…LKYL, FFLI…GMIT, PAFH…LFLF, LFGP…LVEI, GIMF…AVFL, WAFL…ALLL, LVPS…TIIA, IYVP…VIGF, LAAA…ILFY, VLNV…GASA, and LFHG…VMMT.

It belongs to the HAK/KUP transporter (TC 2.A.72) family.

The protein resides in the cell inner membrane. It catalyses the reaction K(+)(in) + H(+)(in) = K(+)(out) + H(+)(out). Transport of potassium into the cell. Likely operates as a K(+):H(+) symporter. In Chlorobium chlorochromatii (strain CaD3), this protein is Probable potassium transport system protein Kup.